The following is a 256-amino-acid chain: Small ribosomal subunit protein eS1 (256 aa).

An N-acetylalanine; partial modification is found at Ala2.

Belongs to the eukaryotic ribosomal protein eS1 family. Component of the small ribosomal subunit. Mature ribosomes consist of a small (40S) and a large (60S) subunit. The 40S subunit contains about 33 different proteins and 1 molecule of RNA (18S). The 60S subunit contains about 49 different proteins and 3 molecules of RNA (25S, 5.8S and 5S).

The protein resides in the cytoplasm. The polypeptide is Small ribosomal subunit protein eS1 (Komagataella phaffii (strain GS115 / ATCC 20864) (Yeast)).